Here is a 345-residue protein sequence, read N- to C-terminus: N-acetyl-gamma-glutamyl-phosphate reductase (345 aa).

Cys149 is a catalytic residue.

This sequence belongs to the NAGSA dehydrogenase family. Type 1 subfamily.

The protein resides in the cytoplasm. The catalysed reaction is N-acetyl-L-glutamate 5-semialdehyde + phosphate + NADP(+) = N-acetyl-L-glutamyl 5-phosphate + NADPH + H(+). It participates in amino-acid biosynthesis; L-arginine biosynthesis; N(2)-acetyl-L-ornithine from L-glutamate: step 3/4. Functionally, catalyzes the NADPH-dependent reduction of N-acetyl-5-glutamyl phosphate to yield N-acetyl-L-glutamate 5-semialdehyde. This Halalkalibacterium halodurans (strain ATCC BAA-125 / DSM 18197 / FERM 7344 / JCM 9153 / C-125) (Bacillus halodurans) protein is N-acetyl-gamma-glutamyl-phosphate reductase.